Reading from the N-terminus, the 610-residue chain is Elongation factor 4 (610 aa).

Residues 13–195 (SHIRNFSIVA…AIVHKLPAPK (183 aa)) enclose the tr-type G domain. Residues 25–30 (DHGKST) and 142–145 (NKID) each bind GTP.

It belongs to the TRAFAC class translation factor GTPase superfamily. Classic translation factor GTPase family. LepA subfamily.

The protein localises to the cell inner membrane. It carries out the reaction GTP + H2O = GDP + phosphate + H(+). Required for accurate and efficient protein synthesis under certain stress conditions. May act as a fidelity factor of the translation reaction, by catalyzing a one-codon backward translocation of tRNAs on improperly translocated ribosomes. Back-translocation proceeds from a post-translocation (POST) complex to a pre-translocation (PRE) complex, thus giving elongation factor G a second chance to translocate the tRNAs correctly. Binds to ribosomes in a GTP-dependent manner. In Rhizobium etli (strain ATCC 51251 / DSM 11541 / JCM 21823 / NBRC 15573 / CFN 42), this protein is Elongation factor 4.